Reading from the N-terminus, the 130-residue chain is Ribosome-binding factor A (130 aa).

The protein belongs to the RbfA family. Monomer. Binds 30S ribosomal subunits, but not 50S ribosomal subunits or 70S ribosomes.

It localises to the cytoplasm. Functionally, one of several proteins that assist in the late maturation steps of the functional core of the 30S ribosomal subunit. Associates with free 30S ribosomal subunits (but not with 30S subunits that are part of 70S ribosomes or polysomes). Required for efficient processing of 16S rRNA. May interact with the 5'-terminal helix region of 16S rRNA. This Flavobacterium johnsoniae (strain ATCC 17061 / DSM 2064 / JCM 8514 / BCRC 14874 / CCUG 350202 / NBRC 14942 / NCIMB 11054 / UW101) (Cytophaga johnsonae) protein is Ribosome-binding factor A.